Consider the following 91-residue polypeptide: C-C motif chemokine 5 (91 aa).

An N-terminal signal peptide occupies residues M1–A23. 2 cysteine pairs are disulfide-bonded: C33–C57 and C34–C73.

This sequence belongs to the intercrine beta (chemokine CC) family.

The protein resides in the secreted. In terms of biological role, chemoattractant for blood monocytes, memory T-helper cells and eosinophils. Causes the release of histamine from basophils and activates eosinophils. May activate several chemokine receptors including CCR1, CCR3, CCR4 and CCR5. May also be an agonist of the G protein-coupled receptor GPR75. Together with GPR75, may play a role in neuron survival through activation of a downstream signaling pathway involving the PI3, Akt and MAP kinases. By activating GPR75 may also play a role in insulin secretion by islet cells. This Cavia porcellus (Guinea pig) protein is C-C motif chemokine 5 (CCL5).